The primary structure comprises 98 residues: NADH-ubiquinone oxidoreductase chain 4L (98 aa).

Transmembrane regions (helical) follow at residues 1–21 (MSMV…GLLI), 30–50 (LLCL…TILI), and 61–81 (IILL…LVMI).

Belongs to the complex I subunit 4L family. In terms of assembly, core subunit of respiratory chain NADH dehydrogenase (Complex I) which is composed of 45 different subunits.

The protein localises to the mitochondrion inner membrane. It carries out the reaction a ubiquinone + NADH + 5 H(+)(in) = a ubiquinol + NAD(+) + 4 H(+)(out). Functionally, core subunit of the mitochondrial membrane respiratory chain NADH dehydrogenase (Complex I) which catalyzes electron transfer from NADH through the respiratory chain, using ubiquinone as an electron acceptor. Part of the enzyme membrane arm which is embedded in the lipid bilayer and involved in proton translocation. The protein is NADH-ubiquinone oxidoreductase chain 4L (MT-ND4L) of Neovison vison (American mink).